Consider the following 39-residue polypeptide: U1-nemetoxin-Csp1c (39 aa).

4 disulfides stabilise this stretch: Cys-1–Cys-15, Cys-8–Cys-19, Cys-14–Cys-36, and Cys-25–Cys-32.

Expressed by the venom gland.

It is found in the secreted. Causes paralysis to insect larvae (H.virescens). This toxin is active only on insects. This Calisoga sp. (Spider) protein is U1-nemetoxin-Csp1c.